A 279-amino-acid chain; its full sequence is MDTELLKTFLEVSRTRHFGRAAESLYLTQSAVSFRIRQLENQLGVNLFTRHRNNIRLTAAGEKLLPYAETLMSTWQAARKEVAHTSRHNEFSIGASASLWECMLNQWLGRLYQNQDAHTGLQFEARIAQRQSLVKQLHERQLDLLITTEAPKMDEFSSQLLGYFTLALYTSAPSKLKGDLNYLRLEWGPDFQQHEAGLIGADEVPILTTSSAELAQQQIAMLNGCTWLPVSWARKKGGLHTVVDSTTLSRPLYAIWLQNSDKNTLIRDLLKINVLDEVY.

The 58-residue stretch at 1–58 folds into the HTH lysR-type domain; it reads MDTELLKTFLEVSRTRHFGRAAESLYLTQSAVSFRIRQLENQLGVNLFTRHRNNIRLT. The H-T-H motif DNA-binding region spans 18–37; sequence FGRAAESLYLTQSAVSFRIR.

It belongs to the LysR transcriptional regulatory family.

Its function is as follows. Negatively regulates the transcription of the flagellar master operon flhDC by binding to the upstream region of the operon. The polypeptide is HTH-type transcriptional regulator HdfR (Escherichia coli (strain SE11)).